The sequence spans 100 residues: Large ribosomal subunit protein uL23 (100 aa).

It belongs to the universal ribosomal protein uL23 family. In terms of assembly, part of the 50S ribosomal subunit. Contacts protein L29, and trigger factor when it is bound to the ribosome.

Functionally, one of the early assembly proteins it binds 23S rRNA. One of the proteins that surrounds the polypeptide exit tunnel on the outside of the ribosome. Forms the main docking site for trigger factor binding to the ribosome. The sequence is that of Large ribosomal subunit protein uL23 from Vibrio campbellii (strain ATCC BAA-1116).